Reading from the N-terminus, the 530-residue chain is Glucose-6-phosphate isomerase (530 aa).

The active-site Proton donor is glutamate 322. Active-site residues include histidine 351 and lysine 455.

It belongs to the GPI family.

Its subcellular location is the cytoplasm. The enzyme catalyses alpha-D-glucose 6-phosphate = beta-D-fructose 6-phosphate. Its pathway is carbohydrate biosynthesis; gluconeogenesis. It participates in carbohydrate degradation; glycolysis; D-glyceraldehyde 3-phosphate and glycerone phosphate from D-glucose: step 2/4. Functionally, catalyzes the reversible isomerization of glucose-6-phosphate to fructose-6-phosphate. The protein is Glucose-6-phosphate isomerase of Geobacter sp. (strain M21).